Here is a 155-residue protein sequence, read N- to C-terminus: Endoribonuclease YbeY (155 aa).

Positions 117, 121, and 127 each coordinate Zn(2+).

It belongs to the endoribonuclease YbeY family. Zn(2+) is required as a cofactor.

The protein localises to the cytoplasm. Single strand-specific metallo-endoribonuclease involved in late-stage 70S ribosome quality control and in maturation of the 3' terminus of the 16S rRNA. In Psychrobacter cryohalolentis (strain ATCC BAA-1226 / DSM 17306 / VKM B-2378 / K5), this protein is Endoribonuclease YbeY.